The chain runs to 526 residues: GMP synthase [glutamine-hydrolyzing] (526 aa).

Positions 13-204 (TVLVVDFGAQ…LYRGAGLSPD (192 aa)) constitute a Glutamine amidotransferase type-1 domain. The Nucleophile role is filled by cysteine 90. Active-site residues include histidine 178 and glutamate 180. The region spanning 205–400 (WTTGNVIEEQ…LGLPDEIVQR (196 aa)) is the GMPS ATP-PPase domain. 232–238 (SGGVDSA) is an ATP binding site.

In terms of assembly, homodimer.

The enzyme catalyses XMP + L-glutamine + ATP + H2O = GMP + L-glutamate + AMP + diphosphate + 2 H(+). Its pathway is purine metabolism; GMP biosynthesis; GMP from XMP (L-Gln route): step 1/1. In terms of biological role, catalyzes the synthesis of GMP from XMP. The protein is GMP synthase [glutamine-hydrolyzing] (guaA) of Streptomyces coelicolor (strain ATCC BAA-471 / A3(2) / M145).